A 311-amino-acid chain; its full sequence is Phospholipid phosphatase 3 (311 aa).

Residues 1–33 lie on the Cytoplasmic side of the membrane; sequence MQNYKYDKAIVAESKNGGSPALNNNPRKGGSKR. S19 bears the Phosphoserine mark. A helical transmembrane segment spans residues 34–54; that stretch reads VLLICLDLFCLFMAGLPFIII. Over 55–85 the chain is Extracellular; it reads ETSTIKPYHRGFYCNDESIKYPQKTGETIND. A helical transmembrane segment spans residues 86 to 106; that stretch reads AVLTAVGIVIAILAIITGEFY. The Cytoplasmic portion of the chain corresponds to 107 to 123; sequence RIYYLKEKSRSTIQNPY. A Dityrosine basolateral targeting motif motif is present at residues 109–110; that stretch reads YY. The helical transmembrane segment at 124-144 threads the bilayer; it reads VAALYKQVGCFLFGCAISQSF. Residues 145–194 are Extracellular-facing; sequence TDIAKVSIGRLRPHFLNVCNPDFSQINCSVGYIQNYRCRGEDSKVQEARK. Positions 149 to 157 are phosphatase sequence motif I; it reads KVSIGRLRP. N171 is a glycosylation site (N-linked (GlcNAc...) asparagine). Positions 183-185 match the Integrin-binding motif motif; it reads RGE. The helical transmembrane segment at 195-215 threads the bilayer; that stretch reads SFFSGHASFSMYTMLYLVLYL. The phosphatase sequence motif II stretch occupies residues 197-200; the sequence is FSGH. The active-site Proton donors is the H200. Topologically, residues 216–226 are cytoplasmic; that stretch reads QARFTWRGARL. The chain crosses the membrane as a helical span at residues 227-244; it reads LRPLLQFTLIMMAFYTGL. Residues 245-256 are phosphatase sequence motif III; that stretch reads SRVSDHKHHPSD. Residues 245–258 are Extracellular-facing; that stretch reads SRVSDHKHHPSDVL. The active-site Nucleophile is H252. The chain crosses the membrane as a helical span at residues 259–279; that stretch reads AGFAQGALVACCIVFFVSDLF. Residues 276 to 311 form a mediates interaction with CTNND1 region; it reads SDLFKTKTTLSLPPSAIRKDMLSPVDIDRSNHHNMV. Residues 280-311 lie on the Cytoplasmic side of the membrane; it reads KTKTTLSLPPSAIRKDMLSPVDIDRSNHHNMV.

It belongs to the PA-phosphatase related phosphoesterase family. In terms of assembly, forms functional homodimers and homooligomers that are not required for substrate recognition and catalytic activity. Can also form heterooligomers with other PLPP2 and PLPP3. Interacts with CTNND1; negatively regulates the PLPP3-mediated stabilization of beta-catenin/CTNNB1. Post-translationally, N-glycosylated. Contains high-mannose oligosaccharides.

The protein resides in the cell membrane. It is found in the basolateral cell membrane. Its subcellular location is the endoplasmic reticulum membrane. The protein localises to the endoplasmic reticulum-Golgi intermediate compartment membrane. It localises to the golgi apparatus membrane. The protein resides in the golgi apparatus. It is found in the trans-Golgi network membrane. Its subcellular location is the membrane raft. It carries out the reaction a 1,2-diacyl-sn-glycero-3-phosphate + H2O = a 1,2-diacyl-sn-glycerol + phosphate. The enzyme catalyses 1,2-dihexadecanoyl-sn-glycero-3-phosphate + H2O = 1,2-dihexadecanoyl-sn-glycerol + phosphate. It catalyses the reaction 1,2-di-(9Z-octadecenoyl)-sn-glycero-3-phosphate + H2O = 1,2-di-(9Z-octadecenoyl)-sn-glycerol + phosphate. The catalysed reaction is a monoacyl-sn-glycero-3-phosphate + H2O = a monoacylglycerol + phosphate. It carries out the reaction (9Z)-octadecenoyl-sn-glycero-3-phosphate + H2O = (9Z-octadecenoyl)-glycerol + phosphate. The enzyme catalyses sphing-4-enine 1-phosphate + H2O = sphing-4-enine + phosphate. It catalyses the reaction an N-acylsphing-4-enine 1-phosphate + H2O = an N-acylsphing-4-enine + phosphate. The catalysed reaction is N-(octanoyl)-sphing-4-enine-1-phosphate + H2O = N-octanoylsphing-4-enine + phosphate. It carries out the reaction N-(9Z-octadecenoyl)-ethanolamine phosphate + H2O = N-(9Z-octadecenoyl) ethanolamine + phosphate. Its pathway is lipid metabolism; phospholipid metabolism. With respect to regulation, magnesium-independent phospholipid phosphatase. Insensitive to N-ethylmaleimide. Inhibited by sphingosine, zinc ions and modestly by propanolol. Magnesium-independent phospholipid phosphatase of the plasma membrane that catalyzes the dephosphorylation of a variety of glycerolipid and sphingolipid phosphate esters including phosphatidate/PA, lysophosphatidate/LPA, diacylglycerol pyrophosphate/DGPP, sphingosine 1-phosphate/S1P and ceramide 1-phosphate/C1P. Also acts on N-oleoyl ethanolamine phosphate/N-(9Z-octadecenoyl)-ethanolamine phosphate, a potential physiological compound. Has both an extracellular and an intracellular phosphatase activity, allowing the hydrolysis and the cellular uptake of these bioactive lipid mediators from the milieu, regulating signal transduction in different cellular processes. Through the dephosphorylation of extracellular sphingosine-1-phosphate and the regulation of its extra- and intracellular availability, plays a role in vascular homeostasis, regulating endothelial cell migration, adhesion, survival, proliferation and the production of pro-inflammatory cytokines. By maintaining the appropriate levels of this lipid in the cerebellum, also ensure its proper development and function. Through its intracellular lipid phosphatase activity may act in early compartments of the secretory pathway, regulating the formation of Golgi to endoplasmic reticulum retrograde transport carriers. Functionally, independently of this phosphatase activity may also function in the Wnt signaling pathway and the stabilization of beta-catenin/CTNNB1, thereby regulating cell proliferation, migration and differentiation in angiogenesis or yet in tumor growth. Also plays a role in integrin-mediated cell-cell adhesion in angiogenesis. This Bos taurus (Bovine) protein is Phospholipid phosphatase 3.